Reading from the N-terminus, the 858-residue chain is Neural cell adhesion molecule 1 (858 aa).

The signal sequence occupies residues 1-19 (MLRTKDLIWTLFFLGTAVS). 5 consecutive Ig-like C2-type domains span residues 20–111 (LQVD…ATVN), 116–205 (QKLM…KDIQ), 212–302 (PTVQ…ASIH), 309–414 (PKIT…LEVQ), and 417–502 (PKLQ…ESLE). Residues 20–721 (LQVDIVPSQG…NGSPTAGLST (702 aa)) are Extracellular-facing. 2 disulfide bridges follow: C41–C96 and C139–C189. Residues 152 to 156 (KHKGR) and 161 to 165 (KKDVR) contribute to the heparin site. Residue N222 is glycosylated (N-linked (GlcNAc...) asparagine). Cysteines 235 and 288 form a disulfide. N-linked (GlcNAc...) asparagine glycosylation is found at N316, N348, N434, N460, and N489. A disulfide bond links C330 and C396. Cysteines 437 and 490 form a disulfide. 2 Fibronectin type-III domains span residues 510-609 (TPSS…TQPV) and 611-706 (EPSA…SAQP). The helical transmembrane segment at 722 to 739 (GAIVGILIVIFVLLLVVM) threads the bilayer. At 740–858 (DITCYFLNKC…TQTKENESKA (119 aa)) the chain is on the cytoplasmic side. Positions 765–858 (PGAKGKDMEE…TQTKENESKA (94 aa)) are disordered. Basic and acidic residues-rich tracts occupy residues 768–809 (KGKD…HTEP) and 817–834 (EPEK…ESEA). Phosphoserine occurs at positions 780 and 784.

In terms of assembly, interacts with MDK. Found in a complex with SLC39A6, SLC39A10 and with NCAM1; this complex controls NCAM1 phosphorylation and integration into focal adhesion complexes during epithelial-tomesenchymal transition. Interacts with synaptic plasticity regulator PANTS. Polysialylated by ST8SIA2 and ST8SIA4. Polysialylation modulates cell interactions by confering both attractive and repulsive properties that are highly regulated by ST8SIA2 and ST8SIA4. Polysialylation is formed on a-2,3-linked sialic acid of core glycans.

The protein localises to the cell membrane. This protein is a cell adhesion molecule involved in neuron-neuron adhesion, neurite fasciculation, outgrowth of neurites, etc. The chain is Neural cell adhesion molecule 1 from Rattus norvegicus (Rat).